Reading from the N-terminus, the 214-residue chain is uncharacterized protein (214 aa).

CBS domains follow at residues 7–65 (MDKN…KKPI) and 69–129 (MRPV…EIPV).

This is an uncharacterized protein from Methanocaldococcus jannaschii (strain ATCC 43067 / DSM 2661 / JAL-1 / JCM 10045 / NBRC 100440) (Methanococcus jannaschii).